The sequence spans 5068 residues: MGNEASLEGEGLPEGLAAAAGGAGGSGSALHPGIPAGMEADLSQLSEEERRQIAAVMSRAQGLPKGSVPAAAAESPSMHRKQELDSSQAPQQPGKPPDPGRPPQHGLSKSRTTDTFRSEQKLPGRSPSTISLKESKSRTDFKEEYKSSMMPGFFSDVNPLSAVSSVVNKFNPFDLISDSEAVQEETTKKQKVAQKDQGKSEGITKPSLQQPSPKLIPKQQGPGKEVIPQDIPSKSVSSQQAEKTKPQAPGTAKPSQQSPAQTPAQQAKPVAQQPGPAKATVQQPGPAKSPAQPAGTGKSPAQPPVTAKPPAQQAGLEKTSLQQPGPKSLAQTPGQGKVPPGPAKSPAQQPGTAKLPAQQPGPQTAAKVPGPTKTPAQLSGPGKTPAQQPGPTKPSPQQPIPAKPQPQQPVATKPQPQQPAPAKPQPQHPTPAKPQPQHPTPAKPQPQQPTPAKPQPQQPTPAKPQPQQPTPAKPQPQHPTPAKPQPQQPGLGKPSAQQPSKSISQTVTGRPLQAPPTSAAQAPAQGLSKTICPLCNTTELLLHTPEKANFNTCTECQSTVCSLCGFNPNPHLTEIKEWLCLNCQMQRALGGELAAIPSSPQPTPKAASVQPATASKSPVPSQQASPKKELPSKQDSPKAPESKKPPPLVKQPTLHGPTPATAPQPPVAEALPKPAPPKKPSAALPEQAKAPVADVEPKQPKTTETLTDSPSSAAATSKPAILSSQVQAQAQVTTAPPLKTDSAKTSQSFPPTGDTITPLDSKAMPRPASDSKIVSHPGPTSESKDPVQKKEEPKKAQTKVTPKPDTKPVPKGSPTPSGTRPTTGQATPQSQQPPKPPEQSRRFSLNLGGIADAPKSQPTTPQETVTGKLFGFGASIFSQASNLISTAGQQAPHPQTGPAAPSKQAPPPSQTLAAQGPPKSTGPHPSAPAKTTAVKKETKGPAAENLEAKPVQAPTVKKAEKDKKPPPGKVSKPPPTEPEKAVLAQKPDKTTKPKPACPLCRTELNVGSQDPPNFNTCTECKNQVCNLCGFNPTPHLTEIQEWLCLNCQTQRAISGQLGDMDKMPPASSGPKASPVPAPAEPPPQKTPTAAHAKGKKKETEVKAETEKQIPEKETPSIEKTPPAVATDQKLEESEVTKSLVSVLPEKKPSEEEKALPADKKEKKPPAAEAPPLEEKKPIPDDQKLPPDAKPSASEGEEKRDLLKAHVQIPEEGPIGKVASLACEGEQQPDTRPEDLPGATPQTLPKDRQKESRDVTQPQAEGTAKEGRGEPSKDRTEKEEDKSDTSSSQQPKSPQGLSDTGYSSDGISGSLGEIPSLIPSDEKDLLKGLKKDSFSQESSPSSPSDLAKLESTVLSILEAQASTLVGEKAEKKTQPQKVSPEQPQDQQKTQTPSETRDISISEEEIKESQEKKVTSKKDSAQGFPSRKEHKENPELVDDLSPRRASYDSVEDSSESENSPVARRKRRTSIGSSSSEEYKQEDSQGSGEDEDFIRKQIIEMSADEDASGSEDEEFIRSQLKEIGGVTESQKREETKGKGKSPAGKHRRLTRKSSTSFDDDAGRRHSWHDEDDETFDESPELKFRETKSQESEELVVAGGGGLRRFKTIELNSTVTDKYSAESSQKKTTLYFDEEPELEMESLTDSPEDRSRGEGSSSLHASSFTPGTSPTSVSSLDEDSDSSPSHKKGESKQQRKARHRSHGPLLPTIEDSSEEEELREEEELLKEQEKQRELEQQQRKSSSKKSKKDKDELRAQRRRERPKTPPSNLSPIEDASPTEELRQAAEMEELHRSSCSEYSPSIESDPEGFEISPEKIIEVQKVYKLPTAVSLYSPTDEQSVMQKEGAQKALKSAEEMYEEMMHKPHKYKAFPAANERDEVFEKEPLYGGMLIEDYIYESLVEDTYNGSVDGSLLTRQDEQNGFMQQRGREQKIRLQEQIYDDPMQKITDLQKEFYELESLHSIVPQEDIVSSSYIIPESHEIVDLGSMVTSTSEEKKLLDADAAYEELMKRQQMQVTDGSSLIQTTMGDDMAESTLDFDRVQDASLTSSILSGASLTDSTSSATLSIPDVKITQHFSTEEFEDEYVTDYTREIQEIIAHESLILTYSEPSESATSVPPSDTPSLTSSISSVCTTDSSSPVTTLDSLTTVYTEPADVITKFKDSEEISSTYFPGSVIDYPEDIGVSLDRTITPESRTNADQIMISFPGIAPSITESVATKPERPQADTISTDLPISEKELIKGKKETGDGIILEVLDAYKDKREESEAELTKISLPETGLAPTPSSQTKEQPGSPHSVSGEILGQEKPTYRSPSGGLPVSTHPSKSHPFFRSSSLDISAQPPPPPPPPPPPPPPPPPPPPPPLPPATSPKPPTYPKRKLAAAAPVAPTAIVTAHADAIPTVEATAARRSNGLPATKICAAAPPPVPPKPSSIPTGLVFTHRPEASKPPIAPKPAVPEIPVTTQKTTDTCPKPTGLPLTSNMSLNLVTSADYKLPSPTSPLSPHSNKSSPRYSKSLMETYVVITLPSEPGTPTDSSAAQAITSWPLGSPPKDLVSLETVFSVVPPMTSTEIPSASQPTLYTSGALGTFSVTPAVTASLFQTVPTSLTQFLPAEASKPEVSAVSSAVPSVAPRSVSIPIPPEPLALDRHQYKENGKLPLIGDAIDLRTIPKSEVKVTEKCMDLSASAMDVKRQTTANEVYRRQISAVQPSIINLSAASSLGTPVTMDSKTVAVVTCTDTTIYTTGTESQVGIEHAVTSPLQLTTSKHTELQYRKPSSQAFPMIRDEAPINLSLGPSTQAVTLAVTKPVTVPPVGVTNGWTDSTISQGITDGEVVDLSTSKSHRTVVTMDESTSNVVTKIIEDEEKPVDLTAGRRAVCCDMVYKLPFGRSCTAQQPATTLPEDRFGYRDDHYQYDRSGPYGYRGIGGMKPSMSDTNLAEAGHFFYKSKNAFDYSGGTEAAVDLTSGRVSTGEVMDYSSKTTGPYPETRQVISGVGISTPQYSTARMTPPPGPQYGVGSVLRSSNGVVYSSVATPIPSTFAITTQPGSIFSTTVRDLSGIHTTDAITSLSALHQSQPMPRSYFITTGASETDISVTSIDINASLQTITMETLPAETMDSVPTLTTASEVFSEVVGEESTLLIVPDEDKQQQQLDLERELLELEKIKQQRFAEELEWERQEIQRFREQEKIMVQKKLEELQSMKQHLLYQQEEERQAQFMMRQETLAQQQLQLEQIQQLQQQLHQQLEEQKLRQIYQYNYEPSGTASPQTTTEQAILEGQYVATEGSQFWATEDATTTASTVVAIEIPQSQGWYTVQSDGVTQYIAPPGILSTVSEIPLTDVVVKEEKQPKKRSSGAKVRGQYDEMGESMADDPRNLKKIVDSGVQTDDEETADRTYASRRRRTKKSVDTSVQTDDEDQDEWDMPSRSRRKARTGKYGDSTAEGDKTKPPSKVSSVAVQTVAEISVQTEPLGTIRTPSIRARVDAKVEIIKHISAPEKTYKGGSLGCQTETDPDTQSPPYMGATSPPKDKKRPTPLEIGYSSSHLRADPTVQLAPSPPKSPKVLYSPISPLSPGHALEPAFVPYEKPLPDDISPQKVLHPDMAKVPPASPKTAKMMQRSMSDPKPLSPTADESSRAPFQYSEGFTAKGSQTTSGTQKKVKRTLPNPPPEEASTGTQSTYSTMGTASRRRMCRTNTMARAKILQDIDRELDLVERESAKLRKKQAELDEEEKEIDAKLRYLEMGINRRKEALLKEREKRERAYLQGVAEDRDYMSDSEVSSTRPSRVESQHGIERPRTAPQTEFSQFIPPQTQTEAQLVPPTSPYTQYQYSSPALPTQAPTPYTQQSHFQQQTLYHQQVSPYQTQPTFQAVATMSFTPQAQPTPTPQPSYQLPSQMMVIQQKPRQTTLYLEPKITSTYEVIRNQPLMIAPVSTDNTYAVSHLGSKYNSLDLRIGLEERSSMASSPISSISADSFYADIDHHTSRNYVLIDDIGDITKGTAALSSAFSLHEKDLSKTDRLLRTTETRRSQEVTDFLAPLQTSSRLHSYVKAEEDSMEDPYELKLLKHQIKQEFRRGTESLDHLAGLSHYYHADTSYRHFPKSEKYSISRLTLEKQAAKQLPAAILYQKQSKHKKALIDPKMSKFSPIQESRDLEPDYPTYLSSSTSSIGGISSRARLLQDDITFGLRKNITDQQKFMGSSLGSGLGTLGNTIRSALQDEADKPYSSGSRSRPSSRPSSVYGLDLSIKRDSSSSSLRLKAQEAEALDVSFGHSSSSARTKPTSLPISQSRGRIPIVAQNSEEESPLSPVGQPMGMARAAAGPLPPISADTRDQFGSSHSLPEVQQHMREESRTRGYDRDIAFIMDDFQHAMSDSEAYHLRREETDWFDKPRESRLENGHGLDRKLPERLVHSRPLSQHQEQILQMNGKTMHYIFPHARIKITRDSKDHTVSGNGLGIRIVGGKEIPGHSGEIGAYIAKILPGGSAEHSGKLIEGMQVLEWNGIPLTSKTYEEVQSIINQQSGEAEICVRLDLNMLSDSENPQHLELHEPPKVVDKAKSPGVDPKQLAAELQKVSLQQSPLVMSSVVEKGAHAHSGPTSAGSSSVPSPGQPGSPSVSKKKHGGSKPTDVSKTASHPITGEIQLQINYDLGNLIIHILQARNLVPRDNNGYSDPFVKVYLLPGRGQVMVVQNASVEYKRRTKYVQKSLNPEWNQTVIYKSISMEQLMKKTLEVTVWDYDRFSSNDFLGEVLIDLSSTSHLDNTPRWYPLKEQTESIEHGKSHSSQNSQQSPKPSVIKSRSHGIFPDPSKDMQVPTIEKSHSSPGSSKSSSEGHLRSHGPSRSQSKTSVAQTHLEDAGAAIAAAEAAVQQLRIQPTKPTNHRPAETSVSTGSSGSSVGSGYSVDSEGSSCVAGEPNLLPIPRIGKMGQNGQDPVKQPGMGAADTEAKTQVMGEIKLALKKEMKTDGEQLIVEILQCRNITYKFKSPDHLPDLYVKIYVINIATQKKVIKKKTRVCRHDREPSFNETFRFSLSPAGHSLQILLFSNGGKFMKKTLIGEACIWLDKVDLRKRIVNWHKLLMSPTQTH.

Residues 1 to 20 (MGNEASLEGEGLPEGLAAAA) show a composition bias toward low complexity. Disordered stretches follow at residues 1–143 (MGNE…DFKE) and 173–524 (FDLI…QAPA). Positions 93–102 (PGKPPDPGRP) are enriched in pro residues. 3 stretches are compositionally biased toward basic and acidic residues: residues 111–122 (RTTDTFRSEQKL), 133–143 (KESKSRTDFKE), and 185–199 (ETTKKQKVAQKDQGK). Position 212 is a phosphoserine (serine 212). Residues 232–241 (PSKSVSSQQA) show a composition bias toward polar residues. Over residues 252-279 (AKPSQQSPAQTPAQQAKPVAQQPGPAKA) the composition is skewed to low complexity. A compositionally biased stretch (polar residues) spans 319 to 334 (TSLQQPGPKSLAQTPG). Composition is skewed to pro residues over residues 391 to 407 (PTKPSPQQPIPAKPQPQ) and 416 to 487 (PQQP…PQPQ). Residues 401-500 (PAKPQPQQPV…LGKPSAQQPS (100 aa)) are 10 X 10 AA tandem approximate repeats of P-A-K-P-Q-P-Q-Q-P-X. A compositionally biased stretch (polar residues) spans 495–508 (SAQQPSKSISQTVT). Low complexity predominate over residues 515–524 (PPTSAAQAPA). The C4-type zinc finger occupies 532 to 556 (CPLCNTTELLLHTPEKANFNTCTEC). 4 disordered regions span residues 594 to 867 (AAIP…TVTG), 883 to 1005 (LIST…TELN), 1057 to 1345 (LGDM…PSDL), and 1364 to 1803 (VGEK…SDPE). The segment covering 610–625 (QPATASKSPVPSQQAS) has biased composition (polar residues). Positions 626–644 (PKKELPSKQDSPKAPESKK) are enriched in basic and acidic residues. Over residues 709 to 738 (SPSSAAATSKPAILSSQVQAQAQVTTAPPL) the composition is skewed to low complexity. A compositionally biased stretch (basic and acidic residues) spans 782–795 (ESKDPVQKKEEPKK). The segment covering 809-830 (VPKGSPTPSGTRPTTGQATPQS) has biased composition (low complexity). 2 positions are modified to phosphoserine: serine 844 and serine 856. Composition is skewed to polar residues over residues 856-865 (SQPTTPQETV) and 883-893 (LISTAGQQAPH). Threonine 860 carries the post-translational modification Phosphothreonine. The C4-type zinc-finger motif lies at 997 to 1020 (CPLCRTELNVGSQDPPNFNTCTEC). A compositionally biased stretch (pro residues) spans 1073–1085 (SPVPAPAEPPPQK). The span at 1097–1116 (KETEVKAETEKQIPEKETPS) shows a compositional bias: basic and acidic residues. Position 1120 is a phosphothreonine (threonine 1120). 4 stretches are compositionally biased toward basic and acidic residues: residues 1144–1165 (PEKKPSEEEKALPADKKEKKPP), 1172–1186 (LEEKKPIPDDQKLPP), 1244–1253 (PKDRQKESRD), and 1262–1283 (TAKEGRGEPSKDRTEKEEDKSD). Residues 1290–1306 (PKSPQGLSDTGYSSDGI) are compositionally biased toward polar residues. Residues serine 1292, serine 1302, serine 1303, serine 1332, serine 1334, serine 1337, serine 1338, and serine 1341 each carry the phosphoserine modification. The segment covering 1319-1333 (SDEKDLLKGLKKDSF) has biased composition (basic and acidic residues). Positions 1334 to 1343 (SQESSPSSPS) are enriched in low complexity. Residues 1374–1392 (PQKVSPEQPQDQQKTQTPS) show a composition bias toward polar residues. Positions 1405-1444 (KESQEKKVTSKKDSAQGFPSRKEHKENPELVDDLSPRRAS) are enriched in basic and acidic residues. Phosphoserine occurs at positions 1439, 1451, 1452, 1454, 1457, 1481, 1484, 1505, and 1507. The segment covering 1499–1511 (SADEDASGSEDEE) has biased composition (acidic residues). Position 1552 is a phosphothreonine (threonine 1552). Phosphoserine is present on residues serine 1553, serine 1563, and serine 1575. Acidic residues predominate over residues 1566 to 1575 (DEDDETFDES). The segment covering 1576 to 1587 (PELKFRETKSQE) has biased composition (basic and acidic residues). Polar residues predominate over residues 1606–1624 (ELNSTVTDKYSAESSQKKT). Over residues 1628 to 1638 (FDEEPELEMES) the composition is skewed to acidic residues. Serine 1638 carries the phosphoserine modification. A Phosphothreonine modification is found at threonine 1640. Serine 1642 and serine 1647 each carry phosphoserine. Over residues 1650 to 1667 (EGSSSLHASSFTPGTSPT) the composition is skewed to polar residues. Residues 1707 to 1720 (DSSEEEELREEEEL) are compositionally biased toward acidic residues. A phosphoserine mark is found at serine 1708 and serine 1709. Over residues 1721-1734 (LKEQEKQRELEQQQ) the composition is skewed to basic and acidic residues. Threonine 1760 is subject to Phosphothreonine. Phosphoserine is present on serine 1766. Over residues 1775–1790 (EELRQAAEMEELHRSS) the composition is skewed to basic and acidic residues. A phosphoserine mark is found at serine 1795, serine 1800, serine 1808, and serine 1829. Disordered stretches follow at residues 2104 to 2126 (PSESATSVPPSDTPSLTSSISSV) and 2261 to 2377 (EAEL…AAAA). The segment covering 2109–2126 (TSVPPSDTPSLTSSISSV) has biased composition (low complexity). Residues 2277–2291 (TPSSQTKEQPGSPHS) are compositionally biased toward polar residues. Over residues 2334–2368 (QPPPPPPPPPPPPPPPPPPPPPPLPPATSPKPPTY) the composition is skewed to pro residues. Residue serine 2495 is modified to Phosphoserine. Threonine 2686 carries O-linked (GlcNAc) threonine glycosylation. O-linked (GlcNAc) serine glycosylation is present at serine 2960. At threonine 2998 the chain carries Phosphothreonine. Disordered stretches follow at residues 3334 to 3443 (KEEK…SKVS) and 3490 to 3556 (KGGS…LYSP). A Phosphoserine modification is found at serine 3358. The span at 3361 to 3370 (DDPRNLKKIV) shows a compositional bias: basic and acidic residues. Phosphoserine is present on serine 3372. 2 positions are modified to phosphothreonine: threonine 3376 and threonine 3403. Residues 3403–3412 (TDDEDQDEWD) show a composition bias toward acidic residues. The segment covering 3495 to 3507 (GCQTETDPDTQSP) has biased composition (polar residues). Phosphoserine is present on residues serine 3506, serine 3514, serine 3545, serine 3549, serine 3555, serine 3558, serine 3561, serine 3582, serine 3608, serine 3610, and serine 3616. 2 disordered regions span residues 3576 to 3679 (PLPD…RRRM) and 3760 to 3797 (DYMSDSEVSSTRPSRVESQHGIERPRTAPQTEFSQFIP). 2 stretches are compositionally biased toward polar residues: residues 3636–3645 (KGSQTTSGTQ) and 3661–3673 (STGTQSTYSTMGT). The residue at position 3763 (serine 3763) is a Phosphoserine. Residues 3773 to 3785 (SRVESQHGIERPR) show a composition bias toward basic and acidic residues. Positions 3787–3797 (APQTEFSQFIP) are enriched in polar residues. Phosphoserine occurs at positions 4016, 4042, and 4132. Disordered stretches follow at residues 4207–4231 (ADKPYSSGSRSRPSSRPSSVYGLDL) and 4254–4273 (VSFGHSSSSARTKPTSLPIS). Over residues 4210–4231 (PYSSGSRSRPSSRPSSVYGLDL) the composition is skewed to low complexity. The segment covering 4257–4273 (GHSSSSARTKPTSLPIS) has biased composition (polar residues). A phosphoserine mark is found at serine 4286, serine 4290, serine 4293, serine 4322, and serine 4358. A disordered region spans residues 4317–4339 (RDQFGSSHSLPEVQQHMREESRT). A PDZ domain is found at 4424–4518 (RIKITRDSKD…EAEICVRLDL (95 aa)). The interval 4574-4620 (KGAHAHSGPTSAGSSSVPSPGQPGSPSVSKKKHGGSKPTDVSKTASH) is disordered. Residues 4578–4601 (AHSGPTSAGSSSVPSPGQPGSPSV) show a composition bias toward low complexity. The residue at position 4592 (serine 4592) is a Phosphoserine. The region spanning 4622-4751 (ITGEIQLQIN…SHLDNTPRWY (130 aa)) is the C2 1 domain. 2 residues coordinate Ca(2+): aspartate 4651 and aspartate 4657. Position 4706 is a phosphoserine (serine 4706). Residues aspartate 4721, aspartate 4723, serine 4726, and aspartate 4729 each coordinate Ca(2+). Disordered regions lie at residues 4758 to 4834 (ESIE…SVAQ) and 4857 to 4891 (QPTKPTNHRPAETSVSTGSSGSSVGSGYSVDSEGS). Composition is skewed to low complexity over residues 4766-4778 (HSSQNSQQSPKPS) and 4805-4815 (SSPGSSKSSSE). The span at 4823-4834 (PSRSQSKTSVAQ) shows a compositional bias: polar residues. A compositionally biased stretch (low complexity) spans 4870–4891 (SVSTGSSGSSVGSGYSVDSEGS). Residues 4933-5058 (VMGEIKLALK…DLRKRIVNWH (126 aa)) enclose the C2 2 domain.

As to quaternary structure, interacts with BSN, ERC2/CAST1, RIMS1 and UNC13A. Interacts (via C-terminus) with TRIO (via N-terminus). Interacts with CTBP1. Interacts with SIAH1; this interaction negatively regulates SIAH1 E3 ligase activity. Directly interacts with GIT1 and GIT2. Ca(2+) is required as a cofactor. Highly expressed in brain. Moderately expressed in pituitary gland and pancreatic islets. Low levels found in stomach.

It is found in the presynaptic active zone. In terms of biological role, scaffold protein of the presynaptic cytomatrix at the active zone (CAZ) which is the place in the synapse where neurotransmitter is released. After synthesis, participates in the formation of Golgi-derived membranous organelles termed Piccolo-Bassoon transport vesicles (PTVs) that are transported along axons to sites of nascent synaptic contacts. At the presynaptic active zone, regulates the spatial organization of synaptic vesicle cluster, the protein complexes that execute membrane fusion and compensatory endocytosis. Organizes as well the readily releasable pool of synaptic vesicles and safeguards a fraction of them to be not immediately available for action potential-induced release. Also functions in processes other than assembly such as the regulation of specific presynaptic protein ubiquitination by interacting with SIAH1 or the regulation of presynaptic autophagy. Also mediates synapse to nucleus communication leading to reconfiguration of gene expression by associating with the transcriptional corepressor CTBP1 and by subsequently reducing the size of its pool available for nuclear import. The polypeptide is Protein piccolo (Mus musculus (Mouse)).